The chain runs to 456 residues: Sulfate adenylyltransferase (456 aa).

Belongs to the sulfate adenylyltransferase family.

The catalysed reaction is sulfate + ATP + H(+) = adenosine 5'-phosphosulfate + diphosphate. It participates in sulfur metabolism; hydrogen sulfide biosynthesis; sulfite from sulfate: step 1/3. This chain is Sulfate adenylyltransferase (sat), found in Archaeoglobus fulgidus (strain ATCC 49558 / DSM 4304 / JCM 9628 / NBRC 100126 / VC-16).